We begin with the raw amino-acid sequence, 1577 residues long: Pentafunctional AROM polypeptide (1577 aa).

The tract at residues 1–392 is 3-dehydroquinate synthase; it reads MASVGLEKVN…YGTSAHVVSD (392 aa). Residues 80–83, 111–113, and aspartate 116 contribute to the NAD(+) site; these read ETYK and GGV. A 7-phospho-2-dehydro-3-deoxy-D-arabino-heptonate-binding site is contributed by arginine 127. 136–137 is a binding site for NAD(+); that stretch reads TS. 7-phospho-2-dehydro-3-deoxy-D-arabino-heptonate-binding residues include aspartate 143 and lysine 149. Lysine 158 serves as a coordination point for NAD(+). Asparagine 159 contacts 7-phospho-2-dehydro-3-deoxy-D-arabino-heptonate. Residues 176–179 and asparagine 187 each bind NAD(+); that span reads WLET. Glutamate 191 is a binding site for Zn(2+). Residues 191–194 and lysine 258 each bind 7-phospho-2-dehydro-3-deoxy-D-arabino-heptonate; that span reads EVIK. The active-site Proton acceptor; for 3-dehydroquinate synthase activity is the glutamate 268. 7-phospho-2-dehydro-3-deoxy-D-arabino-heptonate-binding positions include 272–276 and histidine 279; that span reads RNLLN. Histidine 279 serves as a coordination point for Zn(2+). Histidine 283 (proton acceptor; for 3-dehydroquinate synthase activity) is an active-site residue. 7-phospho-2-dehydro-3-deoxy-D-arabino-heptonate is bound by residues histidine 295 and lysine 364. Position 295 (histidine 295) interacts with Zn(2+). Residues 405 to 863 are EPSP synthase; that stretch reads VYPFTDVRSS…WDVLHSRLGA (459 aa). Cysteine 845 acts as the For EPSP synthase activity in catalysis. The interval 882 to 1071 is shikimate kinase; that stretch reads VVLIGMRAAG…VPVKRSTFVC (190 aa). 886–893 is a binding site for ATP; sequence GMRAAGKS. Residues 1072–1284 are 3-dehydroquinase; it reads LTFQNLLPEM…AAPGQLTLRQ (213 aa). Histidine 1189 acts as the Proton acceptor; for 3-dehydroquinate dehydratase activity in catalysis. Lysine 1218 functions as the Schiff-base intermediate with substrate; for 3-dehydroquinate dehydratase activity in the catalytic mechanism. Residues 1297–1577 are shikimate dehydrogenase; that stretch reads PKKMFVVGSP…APVYDAVTQE (281 aa).

In the N-terminal section; belongs to the sugar phosphate cyclases superfamily. Dehydroquinate synthase family. The protein in the 2nd section; belongs to the EPSP synthase family. It in the 3rd section; belongs to the shikimate kinase family. This sequence in the 4th section; belongs to the type-I 3-dehydroquinase family. In the C-terminal section; belongs to the shikimate dehydrogenase family. Homodimer. Zn(2+) is required as a cofactor.

The protein resides in the cytoplasm. It carries out the reaction 7-phospho-2-dehydro-3-deoxy-D-arabino-heptonate = 3-dehydroquinate + phosphate. The enzyme catalyses 3-dehydroquinate = 3-dehydroshikimate + H2O. It catalyses the reaction shikimate + NADP(+) = 3-dehydroshikimate + NADPH + H(+). The catalysed reaction is shikimate + ATP = 3-phosphoshikimate + ADP + H(+). It carries out the reaction 3-phosphoshikimate + phosphoenolpyruvate = 5-O-(1-carboxyvinyl)-3-phosphoshikimate + phosphate. It participates in metabolic intermediate biosynthesis; chorismate biosynthesis; chorismate from D-erythrose 4-phosphate and phosphoenolpyruvate: step 2/7. It functions in the pathway metabolic intermediate biosynthesis; chorismate biosynthesis; chorismate from D-erythrose 4-phosphate and phosphoenolpyruvate: step 3/7. The protein operates within metabolic intermediate biosynthesis; chorismate biosynthesis; chorismate from D-erythrose 4-phosphate and phosphoenolpyruvate: step 4/7. Its pathway is metabolic intermediate biosynthesis; chorismate biosynthesis; chorismate from D-erythrose 4-phosphate and phosphoenolpyruvate: step 5/7. It participates in metabolic intermediate biosynthesis; chorismate biosynthesis; chorismate from D-erythrose 4-phosphate and phosphoenolpyruvate: step 6/7. Its function is as follows. The AROM polypeptide catalyzes 5 consecutive enzymatic reactions in prechorismate polyaromatic amino acid biosynthesis. The sequence is that of Pentafunctional AROM polypeptide from Eremothecium gossypii (strain ATCC 10895 / CBS 109.51 / FGSC 9923 / NRRL Y-1056) (Yeast).